We begin with the raw amino-acid sequence, 134 residues long: Protein dpy-30 homolog (134 aa).

The interval 1 to 81 (MEAKTDAPIS…ETNNMPTRQY (81 aa)) is disordered. A compositionally biased stretch (low complexity) spans 31–68 (AQANPTAAPGAPPSGAIAVGQSTNPVAQQQQQPAVAKK). Residues 71–81 (SETNNMPTRQY) show a composition bias toward polar residues.

The protein belongs to the dpy-30 family. Core component of several methyltransferase-containing complexes. Component of the SET1 complex, composed at least of the catalytic subunit Set1, wds/WDR5, Wdr82, Rbbp5, ash2, Cfp1/CXXC1, hcf and Dpy-30L1. Component of the MLL3/4 complex composed at least of the catalytic subunit trr, ash2, Rbbp5, Dpy-30L1, wds, hcf, ptip, Pa1, Utx, Lpt and Ncoa6. In terms of tissue distribution, expressed in larval brain, gonad, imaginal disk and salivary gland and in adult brain, testis, ovary and salivary gland.

The protein resides in the nucleus. In terms of biological role, component of the SET1 complex that specifically di- and trimethylates 'Lys-4' of histone H3 and of the MLL3/4 complex which also methylates histone H3 'Lys-4'. Inhibits MTF-1 transcription factor activity. The sequence is that of Protein dpy-30 homolog from Drosophila melanogaster (Fruit fly).